The primary structure comprises 510 residues: NAD(P)H-quinone oxidoreductase subunit 2 A, chloroplastic (510 aa).

The next 13 helical transmembrane spans lie at 24-44, 57-77, 99-119, 124-144, 149-169, 183-203, 227-247, 295-315, 323-343, 354-374, 395-415, 418-438, and 484-504; these read LLLFDGSLIFPECILIFGLIL, IPWLYFISSTSLVMSITALLF, IFQFLILLCSTLCIPLSVEYI, MAITEFLLFVLTATLGGMFLC, LITIFVAPECFSLCSYLLSGY, YLLMGGASSSILVHGFSWLYG, PGISIALIFITVGIGFKLSPA, WHLLLEILAILSMILGNLIAI, MLAYSSIGQIGYVIIGIIVGD, YMLFYISMNLGTFACIVLFGL, ALSLALCLLSLGGLPPLAGFF, LYLFWCGWQAGLYFLVLIGLL, and MIVCVIASTIPGISMNPIIAI.

This sequence belongs to the complex I subunit 2 family. NDH is composed of at least 16 different subunits, 5 of which are encoded in the nucleus.

It is found in the plastid. It localises to the chloroplast thylakoid membrane. The catalysed reaction is a plastoquinone + NADH + (n+1) H(+)(in) = a plastoquinol + NAD(+) + n H(+)(out). It catalyses the reaction a plastoquinone + NADPH + (n+1) H(+)(in) = a plastoquinol + NADP(+) + n H(+)(out). In terms of biological role, NDH shuttles electrons from NAD(P)H:plastoquinone, via FMN and iron-sulfur (Fe-S) centers, to quinones in the photosynthetic chain and possibly in a chloroplast respiratory chain. The immediate electron acceptor for the enzyme in this species is believed to be plastoquinone. Couples the redox reaction to proton translocation, and thus conserves the redox energy in a proton gradient. In Solanum bulbocastanum (Wild potato), this protein is NAD(P)H-quinone oxidoreductase subunit 2 A, chloroplastic.